Reading from the N-terminus, the 316-residue chain is DNA-directed RNA polymerase subunit alpha (316 aa).

The segment at 1 to 233 (MCMSQFPIEF…HWFNPLQTLE (233 aa)) is alpha N-terminal domain (alpha-NTD). The interval 245-316 (MAQLSNMLIE…LHCQLKKYVD (72 aa)) is alpha C-terminal domain (alpha-CTD).

The protein belongs to the RNA polymerase alpha chain family. As to quaternary structure, in plastids the minimal PEP RNA polymerase catalytic core is composed of four subunits: alpha, beta, beta', and beta''. When a (nuclear-encoded) sigma factor is associated with the core the holoenzyme is formed, which can initiate transcription.

It localises to the plastid. Its subcellular location is the chloroplast. The enzyme catalyses RNA(n) + a ribonucleoside 5'-triphosphate = RNA(n+1) + diphosphate. Functionally, DNA-dependent RNA polymerase catalyzes the transcription of DNA into RNA using the four ribonucleoside triphosphates as substrates. The polypeptide is DNA-directed RNA polymerase subunit alpha (Cyanidioschyzon merolae (strain NIES-3377 / 10D) (Unicellular red alga)).